We begin with the raw amino-acid sequence, 1002 residues long: Isoleucine--tRNA ligase (1002 aa).

Positions 70-80 (PYANGNIHIGH) match the 'HIGH' region motif. Glu630 contributes to the L-isoleucyl-5'-AMP binding site. The short motif at 671 to 675 (KMSKS) is the 'KMSKS' region element. Position 674 (Lys674) interacts with ATP.

Belongs to the class-I aminoacyl-tRNA synthetase family. IleS type 1 subfamily. In terms of assembly, monomer.

It localises to the cytoplasm. The enzyme catalyses tRNA(Ile) + L-isoleucine + ATP = L-isoleucyl-tRNA(Ile) + AMP + diphosphate. Functionally, catalyzes the attachment of isoleucine to tRNA(Ile). As IleRS can inadvertently accommodate and process structurally similar amino acids such as valine, to avoid such errors it has two additional distinct tRNA(Ile)-dependent editing activities. One activity is designated as 'pretransfer' editing and involves the hydrolysis of activated Val-AMP. The other activity is designated 'posttransfer' editing and involves deacylation of mischarged Val-tRNA(Ile). The sequence is that of Isoleucine--tRNA ligase from Bradyrhizobium diazoefficiens (strain JCM 10833 / BCRC 13528 / IAM 13628 / NBRC 14792 / USDA 110).